Consider the following 322-residue polypeptide: Tlg2p-like protein a (322 aa).

At 1-301 (MATRNRTLLF…QRHGGMVKCA (301 aa)) the chain is on the cytoplasmic side. The stretch at 116-146 (KEDQHNIESLTQEITFLLKKSEKQLQRLSAS) forms a coiled coil. The 63-residue stretch at 226-288 (EEVSVEREKE…EDGLKQLQKA (63 aa)) folds into the t-SNARE coiled-coil homology domain. Residues 302–322 (SVLVILCFIMLLLLILKEIFL) form a helical; Anchor for type IV membrane protein membrane-spanning segment.

This sequence belongs to the syntaxin family. Interacts with VTI12 and SYP61 to form a t-SNARE complex and with VPS45. Interacts with TNO1. Binds to YKT61 and YKT62. Core constituent of the SNARE complex required for membrane fusion at the trans-Golgi network. Mostly expressed in flowers, to a lower extent in leaves and roots, and, at low levels, in stems.

Its subcellular location is the golgi apparatus. It is found in the trans-Golgi network membrane. Its function is as follows. Contributes to the regulation of secretory and vacuolar transport pathways in the post-Golgi network, and to the maintenance of the Golgi apparatus and trans-Golgi network (TGN) morphologies. Together with VTI12, required for membrane fusion. Vesicle trafficking protein that functions in the secretory pathway and mediates liposome fusion; the fusion of phospholipid vesicles containing SYP41 and VTI12 is triggered by YKT61 and YKT62. Required for extracellular resistance responses to a fungal pathogen. Also involved in the protection of chloroplasts from salicylic acid-dependent biotic stress. The polypeptide is Tlg2p-like protein a (Arabidopsis thaliana (Mouse-ear cress)).